The chain runs to 402 residues: C2H2 finger domain transcription factor CON7 (402 aa).

Residues 1-247 (MLASSRQPRH…GAQQHKRPRR (247 aa)) form a disordered region. 2 stretches are compositionally biased toward polar residues: residues 19 to 49 (LSSSTLHRSGSPQTGTLRQDATTPTLATSVG) and 72 to 86 (CGDNQSEAQSVTVDT). A compositionally biased stretch (low complexity) spans 87-98 (SSAAQYNASAQQ). 2 stretches are compositionally biased toward polar residues: residues 99–116 (EVRSNNPGNYSASATPTS) and 125–151 (ARSSSFPDHLQQRSYHPASNHSGSSGD). The C2H2-type zinc-finger motif lies at 256 to 282 (YKCGWQGCEKAYGTLNHLNAHVTMQSH). Residues 289–323 (EEFKEIRKEWKARKKEEEAARKADEERQRQAAQSQ) are a coiled coil. Residues 302–317 (KKEEEAARKADEERQR) show a composition bias toward basic and acidic residues. The tract at residues 302 to 402 (KKEEEAARKA…GSNQAMYNQR (101 aa)) is disordered. 3 stretches are compositionally biased toward polar residues: residues 322–341 (SQGGSTEGQAGSDVSQSSNG), 363–373 (AATSTSVQQQP), and 392–402 (GGSNQAMYNQR).

It localises to the nucleus. Transcription factor that plays a central role in appressorium formation and pathogenicity. Required for the expression of a large set of genes including factors that might play a role in membrane metabolism and ergosterol biosynthesis, the chitin-binding protein CBP1,as well as CHS7 that is essential for normal pathogenic development. This Pyricularia oryzae (strain 70-15 / ATCC MYA-4617 / FGSC 8958) (Rice blast fungus) protein is C2H2 finger domain transcription factor CON7.